Reading from the N-terminus, the 256-residue chain is 5'-nucleotidase SurE (256 aa).

4 residues coordinate a divalent metal cation: D8, D9, S40, and N94.

The protein belongs to the SurE nucleotidase family. The cofactor is a divalent metal cation.

Its subcellular location is the cytoplasm. The enzyme catalyses a ribonucleoside 5'-phosphate + H2O = a ribonucleoside + phosphate. Functionally, nucleotidase that shows phosphatase activity on nucleoside 5'-monophosphates. The protein is 5'-nucleotidase SurE of Wolbachia pipientis subsp. Culex pipiens (strain wPip).